A 944-amino-acid polypeptide reads, in one-letter code: Protocadherin gamma-C5 (944 aa).

An N-terminal signal peptide occupies residues 1–29 (MGPKTLPQLAGKWQVLCMLSLCCWGWVSG). 6 consecutive Cadherin domains span residues 30 to 133 (QLRY…SPSF), 134 to 242 (ATPE…APTF), 243 to 350 (QSSV…APEV), 351 to 454 (LLAS…APRF), 455 to 564 (NQQL…APAV), and 571 to 677 (WEHS…MPKS). Residues 30–693 (QLRYSVVEES…PPERSDLTLY (664 aa)) lie on the Extracellular side of the membrane. Residues Asn265, Asn443, and Asn547 are each glycosylated (N-linked (GlcNAc...) asparagine). A helical transmembrane segment spans residues 694-714 (LIVALATVSLLSLVTFTFLSA). At 715–944 (KCLQGNADGD…KKKSGKKEKK (230 aa)) the chain is on the cytoplasmic side. Disordered stretches follow at residues 722 to 747 (DGDGGGGQCCRRQDSPSPDFYKQSSP), 812 to 853 (SNTL…WPNN), and 914 to 944 (ATLTNAAGKRDGKAPAGGNGNKKKSGKKEKK). Residues 820–853 (QQAPPNTDWRFSQAQRPGTSGSQNGDDTGTWPNN) show a composition bias toward polar residues. The span at 934–944 (NKKKSGKKEKK) shows a compositional bias: basic residues.

It is found in the cell membrane. In terms of biological role, potential calcium-dependent cell-adhesion protein. May be involved in the establishment and maintenance of specific neuronal connections in the brain. This is Protocadherin gamma-C5 (PCDHGC5) from Homo sapiens (Human).